The chain runs to 176 residues: NAD(P)H-quinone oxidoreductase subunit 6, chloroplastic (176 aa).

5 helical membrane passes run 10-30 (FLLVFLGSGLILGGLGVVLLP), 32-52 (PIYSAFSLGLVLVCTSLFYIL), 61-81 (AQLLIYVGAINVLIIFAVMFM), 92-112 (LWTVGDGITSMVCISLFISLI), and 152-172 (FFLPFELISIILLVALIGAIA).

The protein belongs to the complex I subunit 6 family. As to quaternary structure, NDH is composed of at least 16 different subunits, 5 of which are encoded in the nucleus.

It localises to the plastid. It is found in the chloroplast thylakoid membrane. It catalyses the reaction a plastoquinone + NADH + (n+1) H(+)(in) = a plastoquinol + NAD(+) + n H(+)(out). It carries out the reaction a plastoquinone + NADPH + (n+1) H(+)(in) = a plastoquinol + NADP(+) + n H(+)(out). NDH shuttles electrons from NAD(P)H:plastoquinone, via FMN and iron-sulfur (Fe-S) centers, to quinones in the photosynthetic chain and possibly in a chloroplast respiratory chain. The immediate electron acceptor for the enzyme in this species is believed to be plastoquinone. Couples the redox reaction to proton translocation, and thus conserves the redox energy in a proton gradient. This Solanum lycopersicum (Tomato) protein is NAD(P)H-quinone oxidoreductase subunit 6, chloroplastic (ndhG).